We begin with the raw amino-acid sequence, 303 residues long: Protoheme IX farnesyltransferase 2 (303 aa).

9 helical membrane passes run 29-49 (VVAL…PGIV), 51-71 (LQPL…AAAF), 96-118 (ISTT…VLYT), 123-143 (LTAW…TAYL), 150-170 (NIVI…TAIT), 177-197 (ALLL…ALAI), 223-243 (CILL…LVGM), 244-264 (CGPI…YKAW), and 281-301 (FSIY…YFWV).

The protein belongs to the UbiA prenyltransferase family. Protoheme IX farnesyltransferase subfamily.

It is found in the cell inner membrane. The catalysed reaction is heme b + (2E,6E)-farnesyl diphosphate + H2O = Fe(II)-heme o + diphosphate. It functions in the pathway porphyrin-containing compound metabolism; heme O biosynthesis; heme O from protoheme: step 1/1. Converts heme B (protoheme IX) to heme O by substitution of the vinyl group on carbon 2 of heme B porphyrin ring with a hydroxyethyl farnesyl side group. In Shewanella frigidimarina (strain NCIMB 400), this protein is Protoheme IX farnesyltransferase 2.